The sequence spans 283 residues: 3-methyl-2-oxobutanoate hydroxymethyltransferase (283 aa).

Mg(2+) is bound by residues D46 and D85. 3-methyl-2-oxobutanoate is bound by residues 46-47, D85, and K115; that span reads DS. Mg(2+) is bound at residue E117. The active-site Proton acceptor is the E184.

This sequence belongs to the PanB family. As to quaternary structure, homodecamer; pentamer of dimers. It depends on Mg(2+) as a cofactor.

Its subcellular location is the cytoplasm. The catalysed reaction is 3-methyl-2-oxobutanoate + (6R)-5,10-methylene-5,6,7,8-tetrahydrofolate + H2O = 2-dehydropantoate + (6S)-5,6,7,8-tetrahydrofolate. The protein operates within cofactor biosynthesis; (R)-pantothenate biosynthesis; (R)-pantoate from 3-methyl-2-oxobutanoate: step 1/2. Catalyzes the reversible reaction in which hydroxymethyl group from 5,10-methylenetetrahydrofolate is transferred onto alpha-ketoisovalerate to form ketopantoate. This Acetivibrio thermocellus (strain ATCC 27405 / DSM 1237 / JCM 9322 / NBRC 103400 / NCIMB 10682 / NRRL B-4536 / VPI 7372) (Clostridium thermocellum) protein is 3-methyl-2-oxobutanoate hydroxymethyltransferase.